The chain runs to 153 residues: 3-hydroxyacyl-[acyl-carrier-protein] dehydratase FabZ (153 aa).

Residue H54 is part of the active site.

This sequence belongs to the thioester dehydratase family. FabZ subfamily.

Its subcellular location is the cytoplasm. It catalyses the reaction a (3R)-hydroxyacyl-[ACP] = a (2E)-enoyl-[ACP] + H2O. Its function is as follows. Involved in unsaturated fatty acids biosynthesis. Catalyzes the dehydration of short chain beta-hydroxyacyl-ACPs and long chain saturated and unsaturated beta-hydroxyacyl-ACPs. The chain is 3-hydroxyacyl-[acyl-carrier-protein] dehydratase FabZ from Shewanella pealeana (strain ATCC 700345 / ANG-SQ1).